A 56-amino-acid polypeptide reads, in one-letter code: Large ribosomal subunit protein bL32 (56 aa).

Residues 1 to 34 are disordered; that stretch reads MAVQQNKPSRSKRGMRRAHDALKTSTISVDKTSG.

It belongs to the bacterial ribosomal protein bL32 family.

In Baumannia cicadellinicola subsp. Homalodisca coagulata, this protein is Large ribosomal subunit protein bL32.